Here is a 236-residue protein sequence, read N- to C-terminus: Sugar fermentation stimulation protein homolog (236 aa).

This sequence belongs to the SfsA family.

The chain is Sugar fermentation stimulation protein homolog from Synechococcus elongatus (strain ATCC 33912 / PCC 7942 / FACHB-805) (Anacystis nidulans R2).